Reading from the N-terminus, the 339-residue chain is Tetraacyldisaccharide 4'-kinase (339 aa).

44-51 (TVGGTGKT) is an ATP binding site.

It belongs to the LpxK family.

It catalyses the reaction a lipid A disaccharide + ATP = a lipid IVA + ADP + H(+). It participates in glycolipid biosynthesis; lipid IV(A) biosynthesis; lipid IV(A) from (3R)-3-hydroxytetradecanoyl-[acyl-carrier-protein] and UDP-N-acetyl-alpha-D-glucosamine: step 6/6. Its function is as follows. Transfers the gamma-phosphate of ATP to the 4'-position of a tetraacyldisaccharide 1-phosphate intermediate (termed DS-1-P) to form tetraacyldisaccharide 1,4'-bis-phosphate (lipid IVA). The polypeptide is Tetraacyldisaccharide 4'-kinase (Bdellovibrio bacteriovorus (strain ATCC 15356 / DSM 50701 / NCIMB 9529 / HD100)).